The sequence spans 285 residues: Phosphatidate cytidylyltransferase (285 aa).

8 consecutive transmembrane segments (helical) span residues 10 to 30 (FVLI…GFAI), 56 to 76 (VWLA…LPEY), 93 to 113 (LGWW…AAIW), 121 to 141 (LIFG…LRAW), 151 to 171 (AIWL…AYMF), 190 to 210 (WQGF…YGMW), 213 to 233 (LDVA…ASVL), and 264 to 284 (IDSL…VFRT).

It belongs to the CDS family.

It localises to the cell inner membrane. It carries out the reaction a 1,2-diacyl-sn-glycero-3-phosphate + CTP + H(+) = a CDP-1,2-diacyl-sn-glycerol + diphosphate. It functions in the pathway phospholipid metabolism; CDP-diacylglycerol biosynthesis; CDP-diacylglycerol from sn-glycerol 3-phosphate: step 3/3. The protein is Phosphatidate cytidylyltransferase (cdsA) of Escherichia coli O157:H7.